The primary structure comprises 201 residues: Small ribosomal subunit protein uS4c (201 aa).

The tract at residues 15–43 is disordered; it reads LGALPGLTSKRPSPGSDLRNQSRSGKRSQ. In terms of domain architecture, S4 RNA-binding spans 89-150; it reads MRLDNILFRL…EQRSRALIQK (62 aa).

It belongs to the universal ribosomal protein uS4 family. Part of the 30S ribosomal subunit. Contacts protein S5. The interaction surface between S4 and S5 is involved in control of translational fidelity.

The protein localises to the plastid. The protein resides in the chloroplast. In terms of biological role, one of the primary rRNA binding proteins, it binds directly to 16S rRNA where it nucleates assembly of the body of the 30S subunit. With S5 and S12 plays an important role in translational accuracy. The chain is Small ribosomal subunit protein uS4c (rps4) from Ceratophyllum demersum (Rigid hornwort).